The following is a 429-amino-acid chain: Glutamate-1-semialdehyde 2,1-aminomutase (429 aa).

An N6-(pyridoxal phosphate)lysine modification is found at Lys-267.

It belongs to the class-III pyridoxal-phosphate-dependent aminotransferase family. HemL subfamily. Homodimer. Pyridoxal 5'-phosphate serves as cofactor.

It localises to the cytoplasm. It catalyses the reaction (S)-4-amino-5-oxopentanoate = 5-aminolevulinate. The protein operates within porphyrin-containing compound metabolism; protoporphyrin-IX biosynthesis; 5-aminolevulinate from L-glutamyl-tRNA(Glu): step 2/2. The protein is Glutamate-1-semialdehyde 2,1-aminomutase of Xanthomonas campestris pv. campestris (strain 8004).